We begin with the raw amino-acid sequence, 243 residues long: NAD-dependent protein deacylase SIR2rp3 (243 aa).

Residues methionine 1–glutamate 239 enclose the Deacetylase sirtuin-type domain. Residue glycine 12–tryptophan 31 participates in NAD(+) binding. Residues tyrosine 56 and arginine 59 each contribute to the substrate site. Glutamine 95–aspartate 98 lines the NAD(+) pocket. Histidine 113 serves as the catalytic Proton acceptor. 2 residues coordinate Zn(2+): cysteine 121 and cysteine 141. NAD(+) contacts are provided by residues glycine 181–serine 183 and alanine 225.

It belongs to the sirtuin family. Class III subfamily. It depends on Zn(2+) as a cofactor.

It localises to the mitochondrion. It catalyses the reaction N(6)-malonyl-L-lysyl-[protein] + NAD(+) + H2O = 2''-O-malonyl-ADP-D-ribose + nicotinamide + L-lysyl-[protein]. It carries out the reaction N(6)-succinyl-L-lysyl-[protein] + NAD(+) + H2O = 2''-O-succinyl-ADP-D-ribose + nicotinamide + L-lysyl-[protein]. The catalysed reaction is N(6)-glutaryl-L-lysyl-[protein] + NAD(+) + H2O = 2''-O-glutaryl-ADP-D-ribose + nicotinamide + L-lysyl-[protein]. NAD-dependent lysine demalonylase, desuccinylase and deglutarylase that specifically removes malonyl, succinyl and glutaryl groups on target proteins. Has weak NAD-dependent protein deacetylase activity; however this activity may not be physiologically relevant in vivo. This Leishmania major protein is NAD-dependent protein deacylase SIR2rp3 (SIR2rp3).